The sequence spans 381 residues: E3 ubiquitin-protein ligase ATL15 (381 aa).

The first 23 residues, 1-23 (MVVMSRVSFYSSFLLLLLEVVVA), serve as a signal peptide directing secretion. A helical transmembrane segment spans residues 40-60 (AIIMIVLVSVFFALGCISVYM). An RING-type; atypical zinc finger spans residues 118 to 160 (CPVCLNEFEDDETLRLIPQCCHVFHPGCIDAWLRSQTTCPLCR).

Belongs to the RING-type zinc finger family. ATL subfamily.

It localises to the membrane. It carries out the reaction S-ubiquitinyl-[E2 ubiquitin-conjugating enzyme]-L-cysteine + [acceptor protein]-L-lysine = [E2 ubiquitin-conjugating enzyme]-L-cysteine + N(6)-ubiquitinyl-[acceptor protein]-L-lysine.. It participates in protein modification; protein ubiquitination. In terms of biological role, E3 ubiquitin-protein ligase able to catalyze polyubiquitination with ubiquitin-conjugating enzyme E2 UBC8, UBC10, UBC11, UBC28 and UBC29 in vitro. This is E3 ubiquitin-protein ligase ATL15 (ATL15) from Arabidopsis thaliana (Mouse-ear cress).